The sequence spans 251 residues: Probable transcriptional regulatory protein Blon_1155/BLIJ_1182 (251 aa).

Belongs to the TACO1 family.

It is found in the cytoplasm. This Bifidobacterium longum subsp. infantis (strain ATCC 15697 / DSM 20088 / JCM 1222 / NCTC 11817 / S12) protein is Probable transcriptional regulatory protein Blon_1155/BLIJ_1182.